The chain runs to 315 residues: Aspartate carbamoyltransferase catalytic subunit (315 aa).

Arg-54 and Thr-55 together coordinate carbamoyl phosphate. Lys-82 is a binding site for L-aspartate. Arg-104, His-134, and Gln-137 together coordinate carbamoyl phosphate. The L-aspartate site is built by Arg-174 and Arg-229. Positions 270 and 271 each coordinate carbamoyl phosphate.

It belongs to the aspartate/ornithine carbamoyltransferase superfamily. ATCase family. As to quaternary structure, heterododecamer (2C3:3R2) of six catalytic PyrB chains organized as two trimers (C3), and six regulatory PyrI chains organized as three dimers (R2).

It carries out the reaction carbamoyl phosphate + L-aspartate = N-carbamoyl-L-aspartate + phosphate + H(+). It participates in pyrimidine metabolism; UMP biosynthesis via de novo pathway; (S)-dihydroorotate from bicarbonate: step 2/3. In terms of biological role, catalyzes the condensation of carbamoyl phosphate and aspartate to form carbamoyl aspartate and inorganic phosphate, the committed step in the de novo pyrimidine nucleotide biosynthesis pathway. This is Aspartate carbamoyltransferase catalytic subunit from Leifsonia xyli subsp. xyli (strain CTCB07).